A 598-amino-acid chain; its full sequence is Probable translation initiation factor IF-2 (598 aa).

The tr-type G domain occupies 3 to 225 (LRCPIVSVLG…GLAQKFLEQK (223 aa)). Positions 12 to 19 (GHVDHGKT) are G1. 12–19 (GHVDHGKT) lines the GTP pocket. Residues 37 to 41 (GITQH) are G2. The tract at residues 76 to 79 (DTPG) is G3. GTP is bound by residues 76 to 80 (DTPGH) and 130 to 133 (NKLD). A G4 region spans residues 130 to 133 (NKLD). Residues 200-202 (SAI) are G5.

Belongs to the TRAFAC class translation factor GTPase superfamily. Classic translation factor GTPase family. IF-2 subfamily.

In terms of biological role, function in general translation initiation by promoting the binding of the formylmethionine-tRNA to ribosomes. Seems to function along with eIF-2. The sequence is that of Probable translation initiation factor IF-2 from Methanococcus vannielii (strain ATCC 35089 / DSM 1224 / JCM 13029 / OCM 148 / SB).